We begin with the raw amino-acid sequence, 372 residues long: Methylthioribose-1-phosphate isomerase 2 (372 aa).

D254 functions as the Proton donor in the catalytic mechanism.

Belongs to the eIF-2B alpha/beta/delta subunits family. MtnA subfamily.

The protein localises to the cytoplasm. It localises to the nucleus. It carries out the reaction 5-(methylsulfanyl)-alpha-D-ribose 1-phosphate = 5-(methylsulfanyl)-D-ribulose 1-phosphate. Its pathway is amino-acid biosynthesis; L-methionine biosynthesis via salvage pathway; L-methionine from S-methyl-5-thio-alpha-D-ribose 1-phosphate: step 1/6. Its function is as follows. Catalyzes the interconversion of methylthioribose-1-phosphate (MTR-1-P) into methylthioribulose-1-phosphate (MTRu-1-P). This Trypanosoma cruzi (strain CL Brener) protein is Methylthioribose-1-phosphate isomerase 2.